Here is a 151-residue protein sequence, read N- to C-terminus: MARVQFKQRESTDAIFVHCSATKPSQNVGVREIRQWHKEQGWLDVGYHFIIKRDGTVEAGRDEMAVGSHAKGYNHNSIGVCLVGGIDDKGKFDANFTPAQMQSLRSLLVTLLAKYEGAVLRAHHEVAPKACPSFDLKRWWEKNELVTSDRG.

An N-acetylmuramoyl-L-alanine amidase domain is found at 10–132 (ESTDAIFVHC…HHEVAPKACP (123 aa)). Residues histidine 18, histidine 123, and cysteine 131 each coordinate Zn(2+).

Belongs to the N-acetylmuramoyl-L-alanine amidase 2 family. In terms of assembly, interacts with the viral RNA polymerase. Requires Zn(2+) as cofactor.

Its subcellular location is the host cytoplasm. It carries out the reaction Hydrolyzes the link between N-acetylmuramoyl residues and L-amino acid residues in certain cell-wall glycopeptides.. Its activity is regulated as follows. Binding to the viral RNA polymerase inhibits amidase activity. Plays an important role in the switch between viral transcription and genome replication. Once produced in sufficient amount, interacts with and inhibits the viral RNA polymerase that becomes unable to produce additional late transcripts. This lysozyme-polymerase complex in turn plays an active role in viral genome replication and packaging. Its function is as follows. Endolysin with amidase activity that degrades host peptidoglycans and participates with the holin and spanin proteins in the sequential events which lead to the programmed host cell lysis releasing the mature viral particles. Once the holin has permeabilized the host cell membrane, the endolysin can reach the periplasm and breaking down the peptidoglycan layer. The polypeptide is Endolysin (Escherichia coli (Bacteriophage T7)).